The primary structure comprises 372 residues: Glutamate 5-kinase (372 aa).

Residue lysine 14 participates in ATP binding. Positions 54, 141, and 153 each coordinate substrate. 173 to 174 (TD) lines the ATP pocket. In terms of domain architecture, PUA spans 280–358 (RGHVVIDAGA…GEIESVLGYM (79 aa)).

Belongs to the glutamate 5-kinase family.

It localises to the cytoplasm. It carries out the reaction L-glutamate + ATP = L-glutamyl 5-phosphate + ADP. It functions in the pathway amino-acid biosynthesis; L-proline biosynthesis; L-glutamate 5-semialdehyde from L-glutamate: step 1/2. Its function is as follows. Catalyzes the transfer of a phosphate group to glutamate to form L-glutamate 5-phosphate. The sequence is that of Glutamate 5-kinase from Burkholderia lata (strain ATCC 17760 / DSM 23089 / LMG 22485 / NCIMB 9086 / R18194 / 383).